A 137-amino-acid chain; its full sequence is Large ribosomal subunit protein uL16 (137 aa).

This sequence belongs to the universal ribosomal protein uL16 family. Part of the 50S ribosomal subunit.

Functionally, binds 23S rRNA and is also seen to make contacts with the A and possibly P site tRNAs. In Methylorubrum extorquens (strain CM4 / NCIMB 13688) (Methylobacterium extorquens), this protein is Large ribosomal subunit protein uL16.